Here is a 417-residue protein sequence, read N- to C-terminus: MQSFMTGAPGHHIQSIKKSTSTRLVYVVFFLLVSIVAYILSYWTFSWFNNLDVLKICSKGDNECKGALVVYRLTFGLALYHILLGLVMINVKSAGDSRAKLQDGYWPLKILLLGVLIFVSFFIPNSFFRVYTWISIFSAAIFIFIQLVLLIECAYSLNESCVRKIEDEGHSGKKWYVLLCVLSFGSIALAVAGTVLMLVFYGRGSCSINQFYIVFNLGICLIVGVLSISEKVREYRPSSGLFQSGVVMLYCTYLIYSAINSEPPGTCSSNNTSSPKESTIIIGAVFTIISVCYSAFRSSDSTELLGNHNHYSSIPTDPNAETTGVADDECECTAYNYSFFHFTFACGAMYLSALLTNWATMTSTDITSSSTSSSNSTISVDSGMVSVWVKVVSSWVVVLLYLWTLIGPILLRNRVWD.

Helical transmembrane passes span 25–45 (VYVV…YWTF), 69–89 (VVYR…LVMI), 104–124 (GYWP…FFIP), 131–151 (YTWI…VLLI), 180–200 (CVLS…MLVF), 208–228 (INQF…VLSI), 239–259 (SGLF…YSAI), 276–296 (KEST…YSAF), 339–359 (FFHF…TNWA), and 391–411 (VVSS…PILL).

Belongs to the TDE1 family.

The protein resides in the endoplasmic reticulum membrane. Functionally, enhances the incorporation of serine into phosphatidylserine and sphingolipids. The polypeptide is Probable serine incorporator (serinc) (Dictyostelium discoideum (Social amoeba)).